Consider the following 407-residue polypeptide: Protein CNPPD1 (407 aa).

The chain crosses the membrane as a helical span at residues cysteine 233 to isoleucine 253.

This sequence belongs to the CNPPD1 family.

The protein localises to the membrane. In Mus musculus (Mouse), this protein is Protein CNPPD1 (Cnppd1).